Here is a 160-residue protein sequence, read N- to C-terminus: Bcl-2-like gene 16 protein (160 aa).

Residues Leu-64–Ala-84 carry the BH1 motif.

Belongs to the Bcl-2 family.

This Saimiri sciureus (Common squirrel monkey) protein is Bcl-2-like gene 16 protein (16).